The following is a 376-amino-acid chain: Meiotically up-regulated gene 183 protein (376 aa).

The interval 334-376 (SLENVDDMDDIDVKEPLFSDNDEDVENSDSEDGSESIGSEDEE) is disordered. Residues 353–376 (DNDEDVENSDSEDGSESIGSEDEE) show a composition bias toward acidic residues.

Belongs to the RTT106 family.

Its function is as follows. Has a role in meiosis. The polypeptide is Meiotically up-regulated gene 183 protein (mug183) (Schizosaccharomyces pombe (strain 972 / ATCC 24843) (Fission yeast)).